Here is a 101-residue protein sequence, read N- to C-terminus: Urease subunit beta (101 aa).

Belongs to the urease beta subunit family. As to quaternary structure, heterotrimer of UreA (gamma), UreB (beta) and UreC (alpha) subunits. Three heterotrimers associate to form the active enzyme.

The protein localises to the cytoplasm. It catalyses the reaction urea + 2 H2O + H(+) = hydrogencarbonate + 2 NH4(+). It functions in the pathway nitrogen metabolism; urea degradation; CO(2) and NH(3) from urea (urease route): step 1/1. The sequence is that of Urease subunit beta from Rhodopseudomonas palustris (strain ATCC BAA-98 / CGA009).